Consider the following 146-residue polypeptide: UPF0178 protein BT9727_2823 (146 aa).

This sequence belongs to the UPF0178 family.

The chain is UPF0178 protein BT9727_2823 from Bacillus thuringiensis subsp. konkukian (strain 97-27).